Reading from the N-terminus, the 354-residue chain is Selection and upkeep of intraepithelial T-cells protein 1 (354 aa).

The Ig-like V-type 1 domain maps to 23–141; sequence PSSEQFTVNS…EEAIAEVKVT (119 aa). Cystine bridges form between Cys-49-Cys-123 and Cys-163-Cys-217. In terms of domain architecture, Ig-like C1-type 2 spans 161-233; it reads VECNSEGWFP…TGQEERTSIV (73 aa). The next 3 helical transmembrane spans lie at 243 to 263, 283 to 303, and 326 to 346; these read SVWI…IMMP, LIGI…TITL, and MTVM…LVYF.

It belongs to the SKINT family. As to expression, expressed in the thymus and skin.

The protein resides in the membrane. Functionally, may act by engaging a cell surface molecule on immature T-cells in the embryonic thymus. This chain is Selection and upkeep of intraepithelial T-cells protein 1 (SKINT1), found in Macaca fascicularis (Crab-eating macaque).